The primary structure comprises 916 residues: Isoleucine--tRNA ligase (916 aa).

A 'HIGH' region motif is present at residues 57–67 (PYANGNLHMGH). Residue Glu554 coordinates L-isoleucyl-5'-AMP. The 'KMSKS' region signature appears at 595-599 (KMSKS). Lys598 lines the ATP pocket. Zn(2+) is bound by residues Cys885, Cys888, Cys905, and Cys908.

The protein belongs to the class-I aminoacyl-tRNA synthetase family. IleS type 1 subfamily. In terms of assembly, monomer. Requires Zn(2+) as cofactor.

Its subcellular location is the cytoplasm. It carries out the reaction tRNA(Ile) + L-isoleucine + ATP = L-isoleucyl-tRNA(Ile) + AMP + diphosphate. In terms of biological role, catalyzes the attachment of isoleucine to tRNA(Ile). As IleRS can inadvertently accommodate and process structurally similar amino acids such as valine, to avoid such errors it has two additional distinct tRNA(Ile)-dependent editing activities. One activity is designated as 'pretransfer' editing and involves the hydrolysis of activated Val-AMP. The other activity is designated 'posttransfer' editing and involves deacylation of mischarged Val-tRNA(Ile). This Staphylococcus epidermidis (strain ATCC 12228 / FDA PCI 1200) protein is Isoleucine--tRNA ligase.